Reading from the N-terminus, the 129-residue chain is Small ribosomal subunit protein uS11c (129 aa).

It belongs to the universal ribosomal protein uS11 family. Part of the 30S ribosomal subunit.

The protein resides in the plastid. Its subcellular location is the chloroplast. The chain is Small ribosomal subunit protein uS11c from Euglena gracilis.